The sequence spans 127 residues: uncharacterized protein (127 aa).

A run of 3 helical transmembrane segments spans residues Ala16 to Ile36, Leu59 to Phe79, and Ile100 to Ile120.

Its subcellular location is the cell membrane. This is an uncharacterized protein from Methanocaldococcus jannaschii (strain ATCC 43067 / DSM 2661 / JAL-1 / JCM 10045 / NBRC 100440) (Methanococcus jannaschii).